Here is a 196-residue protein sequence, read N- to C-terminus: Translation machinery-associated protein 22 (196 aa).

The 72-residue stretch at 97–168 (VIVKREARTK…EVVAYIHSLL (72 aa)) folds into the SUI1 domain.

Belongs to the DENR family. In terms of assembly, interacts with the 40S ribosomal subunit.

It localises to the cytoplasm. The sequence is that of Translation machinery-associated protein 22 (TMA22) from Candida glabrata (strain ATCC 2001 / BCRC 20586 / JCM 3761 / NBRC 0622 / NRRL Y-65 / CBS 138) (Yeast).